The chain runs to 429 residues: uncharacterized protein (429 aa).

Catalysis depends on charge relay system residues Ser-116, Asp-179, and His-206.

It belongs to the AB hydrolase 3 family.

The protein localises to the cytoplasm. Its subcellular location is the nucleus. This is an uncharacterized protein from Schizosaccharomyces pombe (strain 972 / ATCC 24843) (Fission yeast).